The primary structure comprises 542 residues: MPEHPRHCDFQRGNVEIGLGPGGDLLGKRLSCPCITSHCSSEKKARSKDPQATSLLPELESTMAPEDHYHQLMSALSEASSFEETQRLYHLGIPSHDLLRVRQEVATATLRGPSGLEVHLPSSTADHRRKQGLVQRREGAVPAAATSFSEREMSQPPPLLSPQNAAHITMSSHLRPPFLGMPTAVCQTPGFSFLPSAQAEMLARQQELLRKQSLARLEMSELLRQKELGSVHRPLLPAPEVALHIPEGPDELQRRGSMLVLKHSSAPLLALPPQGPPGPGPPIPPKESARSRSEKGSLGVQPSQPKETTGAGLWAQEVSEEPSKDSDGEDPETAAAREGTSTPSQVPAGGTRAEGRGLLSGSTLPPPLPLGFPCGAVSPYFHTGTMGGLFTDEETTTLEDVNKWTVDDVCNFVGGLSGCGEYARVFGEQGIDGETLPLLTEEHLLNTMGLKLGPALKIRAQVAKRLGRVFYMASFPVALPLQPPSLQAPELSPGHQPLSPATTTSPYEGTHLPTGQASPKQENGSGTIALLSGAPDPSQLLQ.

A disordered region spans residues 268-364; it reads LLALPPQGPP…GRGLLSGSTL (97 aa). Pro residues predominate over residues 273-285; it reads PQGPPGPGPPIPP. T342 is subject to Phosphothreonine. An SAM domain is found at 404–469; sequence WTVDDVCNFV…AQVAKRLGRV (66 aa). Residues 486–542 form a disordered region; sequence LQAPELSPGHQPLSPATTTSPYEGTHLPTGQASPKQENGSGTIALLSGAPDPSQLLQ. A Phosphoserine modification is found at S499. The span at 499–526 shows a compositional bias: polar residues; the sequence is SPATTTSPYEGTHLPTGQASPKQENGSG.

As to quaternary structure, self-associates. Component of a Polycomb group (PcG) multiprotein PRC1-like complex. Interacts with SAMD7 and PHC2. Expressed in the outer nuclear layer of rod photoreceptors in the retina (at protein level). Predominantly expressed in retinal photoreceptors and pineal gland.

The protein localises to the nucleus. Component of a Polycomb group (PcG) multiprotein PRC1-like complex, essential for establishing rod photoreceptor cell identity and function by silencing nonrod gene expression in developing rod photoreceptor cells. This chain is Sterile alpha motif domain-containing protein 11 (Samd11), found in Mus musculus (Mouse).